We begin with the raw amino-acid sequence, 173 residues long: Lipoprotein signal peptidase (173 aa).

A run of 4 helical transmembrane segments spans residues 7–27 (FFWF…LWVV), 41–61 (LWPG…FSLF), 70–90 (WLSL…PNFN), and 95–115 (AGYG…FVAG). Active-site residues include Asp119 and Asp135. Residues 130–150 (IFNLADVFINIGIICLLIAAW) form a helical membrane-spanning segment.

This sequence belongs to the peptidase A8 family.

It localises to the cell inner membrane. The enzyme catalyses Release of signal peptides from bacterial membrane prolipoproteins. Hydrolyzes -Xaa-Yaa-Zaa-|-(S,diacylglyceryl)Cys-, in which Xaa is hydrophobic (preferably Leu), and Yaa (Ala or Ser) and Zaa (Gly or Ala) have small, neutral side chains.. Its pathway is protein modification; lipoprotein biosynthesis (signal peptide cleavage). This protein specifically catalyzes the removal of signal peptides from prolipoproteins. This Cyanothece sp. (strain PCC 7425 / ATCC 29141) protein is Lipoprotein signal peptidase.